We begin with the raw amino-acid sequence, 463 residues long: UDP-N-acetylmuramoylalanine--D-glutamate ligase (463 aa).

109–115 (GTDGKST) is an ATP binding site.

Belongs to the MurCDEF family.

The protein localises to the cytoplasm. The catalysed reaction is UDP-N-acetyl-alpha-D-muramoyl-L-alanine + D-glutamate + ATP = UDP-N-acetyl-alpha-D-muramoyl-L-alanyl-D-glutamate + ADP + phosphate + H(+). It participates in cell wall biogenesis; peptidoglycan biosynthesis. Its function is as follows. Cell wall formation. Catalyzes the addition of glutamate to the nucleotide precursor UDP-N-acetylmuramoyl-L-alanine (UMA). In Leptospira interrogans serogroup Icterohaemorrhagiae serovar copenhageni (strain Fiocruz L1-130), this protein is UDP-N-acetylmuramoylalanine--D-glutamate ligase.